The chain runs to 151 residues: Protein NrdI (151 aa).

The protein belongs to the NrdI family.

Probably involved in ribonucleotide reductase function. The protein is Protein NrdI of Mesoplasma florum (strain ATCC 33453 / NBRC 100688 / NCTC 11704 / L1) (Acholeplasma florum).